We begin with the raw amino-acid sequence, 312 residues long: MEIASQEDHDMPIPLNTTFGGGGSHGHMIHHHDHHAANSAPPTHNNNNTTQPPPMPLHGNGHGNNYDHHHHQDPHHVGYNAIIKKPMIKYKECLKNHAAAMGGNATDGCGEFMPSGEDGSIEALTCSACNCHRNFHRKEVEGELAATAMSPYHQHPPHRKLMLNHQKIRSAMPHQMIMPIGVSNYRYMHNNSESEDFMEEDGVTTASRSLPNLPYNQKKRFRTKFTPEQKEKMLSFAEKVGWKIQRQEDCVVQRFCEEIGVKRRVLKVWMHNNKIHFSKKNNINLEDNDNEKINNLNNVDLSGNNDMTKIVP.

Residues 20-74 (GGGGSHGHMIHHHDHHAANSAPPTHNNNNTTQPPPMPLHGNGHGNNYDHHHHQDP) form a disordered region. Positions 37 to 50 (ANSAPPTHNNNNTT) are enriched in low complexity. Residues 90-139 (YKECLKNHAAAMGGNATDGCGEFMPSGEDGSIEALTCSACNCHRNFHRKE) form a ZF-HD dimerization-type; degenerate zinc finger. A DNA-binding region (homeobox) is located at residues 218–281 (KKRFRTKFTP…NNKIHFSKKN (64 aa)).

As to quaternary structure, homo- and heterodimer with other ZFHD proteins. Interacts with ZHD1, ZHD2, ZHD5, ZHD7, ZHD8, ZHD10 and ZHD11. In terms of tissue distribution, mostly expressed in flowers and inflorescence.

It localises to the nucleus. In terms of biological role, putative transcription factor. Probably involved in the regulation of floral induction. This chain is Zinc-finger homeodomain protein 4 (ZHD4), found in Arabidopsis thaliana (Mouse-ear cress).